A 118-amino-acid polypeptide reads, in one-letter code: Ribosome-binding factor A (118 aa).

This sequence belongs to the RbfA family. In terms of assembly, monomer. Binds 30S ribosomal subunits, but not 50S ribosomal subunits or 70S ribosomes.

The protein resides in the cytoplasm. In terms of biological role, one of several proteins that assist in the late maturation steps of the functional core of the 30S ribosomal subunit. Associates with free 30S ribosomal subunits (but not with 30S subunits that are part of 70S ribosomes or polysomes). Required for efficient processing of 16S rRNA. May interact with the 5'-terminal helix region of 16S rRNA. This is Ribosome-binding factor A from Latilactobacillus sakei subsp. sakei (strain 23K) (Lactobacillus sakei subsp. sakei).